The following is a 344-amino-acid chain: MIQKLSNLLVTALAVATGVVGHGHINDIVINGVWYQAYDPTTFPYESNPPIVVGWTAADLDNGFVSPDAYQNPDIICHKNATNAKGHASVKAGDTILFQWVPVPWPHPGPIVDYLANCNGDCETVDKTTLEFFKIDGVGLLSGGDPGTWASDVLISNNNTWVVKIPDNLAPGNYVLRHEIIALHSAGQANGAQNYPQCFNIAVSGSGSLQPSGVLGTDLYHATDPGVLINIYTSPLNYIIPGPTVVSGLPTSVAQGSSAATATASATVPGGGSGPTSRTTTTARTTQASSRPSSTPPATTSAPAGGPTQTLYGQCGGSGYSGPTRCAPPATCSTLNPYYAQCLN.

Positions 1–21 (MIQKLSNLLVTALAVATGVVG) are cleaved as a signal peptide. H22 lines the Cu(2+) pocket. Intrachain disulfides connect C77/C198 and C118/C122. Residue N80 is glycosylated (N-linked (GlcNAc...) asparagine). H107 is a Cu(2+) binding site. The N-linked (GlcNAc...) asparagine glycan is linked to N158. O2-binding residues include H184 and Q193. Y195 contacts Cu(2+). The segment at 262–310 (ATASATVPGGGSGPTSRTTTTARTTQASSRPSSTPPATTSAPAGGPTQT) is disordered. Positions 275-310 (PTSRTTTTARTTQASSRPSSTPPATTSAPAGGPTQT) are enriched in low complexity. The 37-residue stretch at 307 to 343 (PTQTLYGQCGGSGYSGPTRCAPPATCSTLNPYYAQCL) folds into the CBM1 domain.

This sequence belongs to the polysaccharide monooxygenase AA9 family. Requires Cu(2+) as cofactor.

Its subcellular location is the secreted. The enzyme catalyses [(1-&gt;4)-beta-D-glucosyl]n+m + reduced acceptor + O2 = 4-dehydro-beta-D-glucosyl-[(1-&gt;4)-beta-D-glucosyl]n-1 + [(1-&gt;4)-beta-D-glucosyl]m + acceptor + H2O.. In terms of biological role, lytic polysaccharide monooxygenase (LPMO) that depolymerizes crystalline and amorphous polysaccharides via the oxidation of scissile alpha- or beta-(1-4)-glycosidic bonds, yielding C1 or C4 oxidation products. Catalysis by LPMOs requires the reduction of the active-site copper from Cu(II) to Cu(I) by a reducing agent and H(2)O(2) or O(2) as a cosubstrate. Shows activity on beta-glucan and amorphous cellulose. Does not show beta-1-3-glucanase, beta-1,6-glucanase, mannanase, xylanase, beta-1,3-galactosidase, amylase, pectinase, nor chitinase activities. This chain is AA9 family lytic polysaccharide monooxygenase cel61A, found in Hypocrea jecorina (Trichoderma reesei).